The following is a 120-amino-acid chain: Large ribosomal subunit protein uL18 (120 aa).

This sequence belongs to the universal ribosomal protein uL18 family. As to quaternary structure, part of the 50S ribosomal subunit; part of the 5S rRNA/L5/L18/L25 subcomplex. Contacts the 5S and 23S rRNAs.

Its function is as follows. This is one of the proteins that bind and probably mediate the attachment of the 5S RNA into the large ribosomal subunit, where it forms part of the central protuberance. The polypeptide is Large ribosomal subunit protein uL18 (Rhizobium rhizogenes (strain K84 / ATCC BAA-868) (Agrobacterium radiobacter)).